The primary structure comprises 455 residues: MDTNNNIEKEILALVKQKVSPIEYENYFSQLKYNPNASKSDIAFFYAPNMLLCNWITAKHGALLKEILSQNKVGMHLAHSVDVRIEVAPKIQINAQANINYKAIKTSVKDSYTFENFVVGSCNNTVYEIAKKVAQSDTPPYNPVLFYGGTGLGKTHILNAIGNHALEKHKKVVLVTSEDFLTDFLKHLDNKTMDSFKKKYRHCDFFLLDDAQFLQGKPKLEEEFFHTFNELHANSKQIVLISDRSPKNIAGLEDRLKSRFEWGITAKVMPPDLETKLSIVKQKCQLNKITLPEEVMEYIAQHISDNIRQMEGAIIKISVNANLMNAPIDLNLAKTVLEDLQKDHAEGSSLENILLAVAQSLNLKSSEIKVSSRQKNVALARKLVVYFARLYTPNPTLSLAQFLDLKDHSSISKMYSSVKKMLEEEKNPFVLSLREEIKNRLNELNDKKTAFNSSE.

A domain I, interacts with DnaA modulators region spans residues 1–75 (MDTNNNIEKE…EILSQNKVGM (75 aa)). Positions 75–106 (MHLAHSVDVRIEVAPKIQINAQANINYKAIKT) are domain II. Positions 107–321 (SVKDSYTFEN…GAIIKISVNA (215 aa)) are domain III, AAA+ region. The ATP site is built by G151, G153, K154, and T155. The segment at 322 to 455 (NLMNAPIDLN…DKKTAFNSSE (134 aa)) is domain IV, binds dsDNA.

Belongs to the DnaA family. Oligomerizes as a right-handed, spiral filament on DNA at oriC.

Its subcellular location is the cytoplasm. In terms of biological role, plays an essential role in the initiation and regulation of chromosomal replication. ATP-DnaA binds to the origin of replication (oriC) to initiate formation of the DNA replication initiation complex once per cell cycle. Binds the DnaA box (a 9 base pair repeat at the origin) and separates the double-stranded (ds)DNA. Forms a right-handed helical filament on oriC DNA; dsDNA binds to the exterior of the filament while single-stranded (ss)DNA is stabiized in the filament's interior. The ATP-DnaA-oriC complex binds and stabilizes one strand of the AT-rich DNA unwinding element (DUE), permitting loading of DNA polymerase. After initiation quickly degrades to an ADP-DnaA complex that is not apt for DNA replication. Binds acidic phospholipids. The polypeptide is Chromosomal replication initiator protein DnaA (Helicobacter pylori (strain G27)).